The sequence spans 67 residues: MDFLKKSLFLVLFLGFFSLSICEEEKRETEEKENEQEDDREERREEKRLLGMIPVAISAISALSKLG.

Residues 1–22 (MDFLKKSLFLVLFLGFFSLSIC) form the signal peptide. A propeptide spanning residues 23–48 (EEEKRETEEKENEQEDDREERREEKR) is cleaved from the precursor. Residues 24-46 (EEKRETEEKENEQEDDREERREE) form a disordered region. Positions 31-40 (EKENEQEDDR) are enriched in acidic residues. Position 66 is a leucine amide (Leu66).

It belongs to the frog skin active peptide (FSAP) family. Medusin subfamily. As to expression, expressed by the skin glands.

The protein localises to the secreted. Antimicrobial peptide with activity against Gram-positive bacteria (S.aureus, MIC=32 mg/L) and fungi (C.albicans, MIC=128 mg/L). Shows weak hemolytic activity. This is Medusin-H1 from Pithecopus hypochondrialis (Orange-legged leaf frog).